The chain runs to 271 residues: Ribosomal RNA small subunit methyltransferase A (271 aa).

S-adenosyl-L-methionine is bound by residues asparagine 22, leucine 24, glycine 49, glutamate 70, aspartate 96, and asparagine 116.

Belongs to the class I-like SAM-binding methyltransferase superfamily. rRNA adenine N(6)-methyltransferase family. RsmA subfamily.

Its subcellular location is the cytoplasm. The enzyme catalyses adenosine(1518)/adenosine(1519) in 16S rRNA + 4 S-adenosyl-L-methionine = N(6)-dimethyladenosine(1518)/N(6)-dimethyladenosine(1519) in 16S rRNA + 4 S-adenosyl-L-homocysteine + 4 H(+). Specifically dimethylates two adjacent adenosines (A1518 and A1519) in the loop of a conserved hairpin near the 3'-end of 16S rRNA in the 30S particle. May play a critical role in biogenesis of 30S subunits. This is Ribosomal RNA small subunit methyltransferase A from Sphingopyxis alaskensis (strain DSM 13593 / LMG 18877 / RB2256) (Sphingomonas alaskensis).